A 379-amino-acid chain; its full sequence is Protein RecA (379 aa).

79-86 provides a ligand contact to ATP; that stretch reads GPESSGKT.

The protein belongs to the RecA family.

Its subcellular location is the cytoplasm. Its function is as follows. Can catalyze the hydrolysis of ATP in the presence of single-stranded DNA, the ATP-dependent uptake of single-stranded DNA by duplex DNA, and the ATP-dependent hybridization of homologous single-stranded DNAs. It interacts with LexA causing its activation and leading to its autocatalytic cleavage. This Streptococcus uberis (strain ATCC BAA-854 / 0140J) protein is Protein RecA.